Consider the following 238-residue polypeptide: Chloride intracellular channel exl-1 (238 aa).

It belongs to the chloride channel CLIC family. Expressed in the intestine, neurons and muscles.

The protein resides in the cytoplasm. Its subcellular location is the membrane. The protein localises to the lysosome membrane. It is found in the golgi apparatus membrane. Its function is as follows. Probable chloride channel. The chain is Chloride intracellular channel exl-1 (exl-1) from Caenorhabditis elegans.